The primary structure comprises 360 residues: Phospho-N-acetylmuramoyl-pentapeptide-transferase (360 aa).

Topologically, residues 1–25 are periplasmic; sequence MLVWLAEHLVKYYSGFNVFSYLTFR. Residues 26-46 form a helical membrane-spanning segment; sequence AIVSLLTALFISLWMGPRMIA. Residues 47–71 lie on the Cytoplasmic side of the membrane; the sequence is HLQKLSFGQVVRNDGPESHFSKRGT. The chain crosses the membrane as a helical span at residues 72–92; that stretch reads PTMGGIMILTAIVISVLLWAY. A topological domain (periplasmic) is located at residue Pro-93. Residues 94-114 traverse the membrane as a helical segment; sequence SNPYVWCVLVVLVGYGVIGFV. Residues 115-131 are Cytoplasmic-facing; the sequence is DDYRKVVRKDTKGLIAR. A helical transmembrane segment spans residues 132 to 152; it reads WKYFWMSVIALGVAFALYLVG. Residues 153 to 167 lie on the Periplasmic side of the membrane; it reads KDTPATQLVVPFFKD. The chain crosses the membrane as a helical span at residues 168-188; it reads VMPQLGLFYILLAYFVIVGTG. Residues 189–198 are Cytoplasmic-facing; that stretch reads NAVNLTDGLD. A helical membrane pass occupies residues 199 to 219; sequence GLAIMPTVFVAGGFALVAWAT. Over 220–235 the chain is Periplasmic; that stretch reads GNMNFASYLHIPYLRH. Residues 236–256 form a helical membrane-spanning segment; that stretch reads AGELVIVCTAIVGAGLGFLWF. Residues 257 to 262 lie on the Cytoplasmic side of the membrane; it reads NTYPAQ. The helical transmembrane segment at 263–283 threads the bilayer; sequence VFMGDVGSLALGGALGIIAVL. Topologically, residues 284-287 are periplasmic; that stretch reads LRQE. The chain crosses the membrane as a helical span at residues 288–308; it reads FLLVIMGGVFVVETLSVILQV. Residues 309-337 lie on the Cytoplasmic side of the membrane; that stretch reads GSFKLRGQRIFRMAPIHHHYELKGWPEPR. Residues 338–358 form a helical membrane-spanning segment; sequence VIVRFWIISLMLVLIGLATLK. The Periplasmic portion of the chain corresponds to 359–360; it reads VR.

It belongs to the glycosyltransferase 4 family. MraY subfamily. Mg(2+) serves as cofactor.

The protein resides in the cell inner membrane. The enzyme catalyses UDP-N-acetyl-alpha-D-muramoyl-L-alanyl-gamma-D-glutamyl-meso-2,6-diaminopimeloyl-D-alanyl-D-alanine + di-trans,octa-cis-undecaprenyl phosphate = di-trans,octa-cis-undecaprenyl diphospho-N-acetyl-alpha-D-muramoyl-L-alanyl-D-glutamyl-meso-2,6-diaminopimeloyl-D-alanyl-D-alanine + UMP. It participates in cell wall biogenesis; peptidoglycan biosynthesis. Its function is as follows. Catalyzes the initial step of the lipid cycle reactions in the biosynthesis of the cell wall peptidoglycan: transfers peptidoglycan precursor phospho-MurNAc-pentapeptide from UDP-MurNAc-pentapeptide onto the lipid carrier undecaprenyl phosphate, yielding undecaprenyl-pyrophosphoryl-MurNAc-pentapeptide, known as lipid I. The polypeptide is Phospho-N-acetylmuramoyl-pentapeptide-transferase (Escherichia coli O157:H7).